Reading from the N-terminus, the 102-residue chain is Protein RnfH (102 aa).

It belongs to the UPF0125 (RnfH) family.

In Haemophilus influenzae (strain PittEE), this protein is Protein RnfH.